A 95-amino-acid polypeptide reads, in one-letter code: Aspartyl/glutamyl-tRNA(Asn/Gln) amidotransferase subunit C (95 aa).

This sequence belongs to the GatC family. As to quaternary structure, heterotrimer of A, B and C subunits.

It catalyses the reaction L-glutamyl-tRNA(Gln) + L-glutamine + ATP + H2O = L-glutaminyl-tRNA(Gln) + L-glutamate + ADP + phosphate + H(+). It carries out the reaction L-aspartyl-tRNA(Asn) + L-glutamine + ATP + H2O = L-asparaginyl-tRNA(Asn) + L-glutamate + ADP + phosphate + 2 H(+). In terms of biological role, allows the formation of correctly charged Asn-tRNA(Asn) or Gln-tRNA(Gln) through the transamidation of misacylated Asp-tRNA(Asn) or Glu-tRNA(Gln) in organisms which lack either or both of asparaginyl-tRNA or glutaminyl-tRNA synthetases. The reaction takes place in the presence of glutamine and ATP through an activated phospho-Asp-tRNA(Asn) or phospho-Glu-tRNA(Gln). This chain is Aspartyl/glutamyl-tRNA(Asn/Gln) amidotransferase subunit C, found in Rhizorhabdus wittichii (strain DSM 6014 / CCUG 31198 / JCM 15750 / NBRC 105917 / EY 4224 / RW1) (Sphingomonas wittichii).